Here is an 82-residue protein sequence, read N- to C-terminus: Small ribosomal subunit protein bS20 (82 aa).

The segment covering 1-11 (MANHKSALKRI) has biased composition (basic residues). The disordered stretch occupies residues 1-20 (MANHKSALKRIRSNETKRLR).

This sequence belongs to the bacterial ribosomal protein bS20 family.

Binds directly to 16S ribosomal RNA. The polypeptide is Small ribosomal subunit protein bS20 (Christiangramia forsetii (strain DSM 17595 / CGMCC 1.15422 / KT0803) (Gramella forsetii)).